Reading from the N-terminus, the 229-residue chain is Vacuolar protein-sorting-associated protein 60 (229 aa).

Residues 9 to 155 (NKKSHDQLLQ…QGDELQEVLA (147 aa)) are a coiled coil. S12 is subject to Phosphoserine. The interval 128 to 159 (INIDKLQDMQDEMLDLIEQGDELQEVLAMNNN) is interaction with VTA1. Residues 186-229 (PTSENSLGNDMPSYLLGANAPPAFIDEEPNLDTEDKNKALESAQ) are disordered. Residues 218 to 229 (TEDKNKALESAQ) show a composition bias toward basic and acidic residues.

Belongs to the SNF7 family. In terms of assembly, interacts with VTA1; the interaction occurs at he endosomal membrane.

The protein resides in the endosome membrane. It is found in the vacuole membrane. Its function is as follows. Has a role in a late stage of multivesicular body (MVB) formation. Can stimulate VPS4 ATPase activity via VTA1. The protein is Vacuolar protein-sorting-associated protein 60 (VPS60) of Saccharomyces cerevisiae (strain ATCC 204508 / S288c) (Baker's yeast).